A 59-amino-acid polypeptide reads, in one-letter code: Transcription elongation factor Spt4 (59 aa).

Cys4, Cys7, Cys16, and Cys19 together coordinate Zn(2+).

Belongs to the archaeal Spt4 family. In terms of assembly, heterodimer composed of Spt4 and Spt5.

Functionally, stimulates transcription elongation. The protein is Transcription elongation factor Spt4 of Methanocaldococcus jannaschii (strain ATCC 43067 / DSM 2661 / JAL-1 / JCM 10045 / NBRC 100440) (Methanococcus jannaschii).